We begin with the raw amino-acid sequence, 366 residues long: Histidinol-phosphate aminotransferase (366 aa).

Lysine 227 carries the post-translational modification N6-(pyridoxal phosphate)lysine.

Belongs to the class-II pyridoxal-phosphate-dependent aminotransferase family. Histidinol-phosphate aminotransferase subfamily. As to quaternary structure, homodimer. Requires pyridoxal 5'-phosphate as cofactor.

It catalyses the reaction L-histidinol phosphate + 2-oxoglutarate = 3-(imidazol-4-yl)-2-oxopropyl phosphate + L-glutamate. It participates in amino-acid biosynthesis; L-histidine biosynthesis; L-histidine from 5-phospho-alpha-D-ribose 1-diphosphate: step 7/9. The polypeptide is Histidinol-phosphate aminotransferase (Campylobacter hominis (strain ATCC BAA-381 / DSM 21671 / CCUG 45161 / LMG 19568 / NCTC 13146 / CH001A)).